A 411-amino-acid polypeptide reads, in one-letter code: Proline-responsive transcriptional activator PutR (411 aa).

Belongs to the CdaR family.

Activates transcription of the putBCP operon. Requires proline as a coactivator. The sequence is that of Proline-responsive transcriptional activator PutR from Bacillus subtilis (strain 168).